A 1175-amino-acid chain; its full sequence is 1-phosphatidylinositol 4,5-bisphosphate phosphodiesterase beta-4 (1175 aa).

N-acetylalanine is present on Ala2. The PI-PLC X-box domain occupies 313-463 (QEMDHPLAHY…LKRKILIKNK (151 aa)). Catalysis depends on residues His328 and His375. Residues 482-511 (EAGESASPANILEDDNEEEIESADQEEEAH) form a disordered region. The segment covering 493–508 (LEDDNEEEIESADQEE) has biased composition (acidic residues). The 117-residue stretch at 565 to 681 (LSTMINYAQP…GYLLKPDFMR (117 aa)) folds into the PI-PLC Y-box domain. The C2 domain maps to 684 to 809 (DRTFDPFSET…SLRNEGNKPL (126 aa)). Disordered stretches follow at residues 863–895 (ADVP…ELRP) and 1082–1110 (KISM…VREL). Polar residues-rich tracts occupy residues 881 to 895 (AKAN…ELRP) and 1085 to 1094 (MENSKAISQD). Phosphothreonine is present on Thr886. Residues 1095-1109 (KSIKNKAERERRVRE) are compositionally biased toward basic and acidic residues.

Requires Ca(2+) as cofactor. In terms of tissue distribution, preferentially expressed in the retina.

Its subcellular location is the cell membrane. The catalysed reaction is a 1,2-diacyl-sn-glycero-3-phospho-(1D-myo-inositol-4,5-bisphosphate) + H2O = 1D-myo-inositol 1,4,5-trisphosphate + a 1,2-diacyl-sn-glycerol + H(+). It carries out the reaction a 1,2-diacyl-sn-glycero-3-phospho-(1D-myo-inositol) + H2O = 1D-myo-inositol 1-phosphate + a 1,2-diacyl-sn-glycerol + H(+). In terms of biological role, activated phosphatidylinositol-specific phospholipase C enzymes catalyze the production of the second messenger molecules diacylglycerol (DAG) and inositol 1,4,5-trisphosphate (IP3) involved in G-protein coupled receptor signaling pathways. PLCB4 is a direct effector of the endothelin receptor signaling pathway that plays an essential role in lower jaw and middle ear structures development. The polypeptide is 1-phosphatidylinositol 4,5-bisphosphate phosphodiesterase beta-4 (Homo sapiens (Human)).